Here is a 339-residue protein sequence, read N- to C-terminus: tRNA N6-adenosine threonylcarbamoyltransferase (339 aa).

His-114 and His-118 together coordinate Fe cation. Residues 137–141, Asp-170, Gly-183, Asp-187, and Asn-277 contribute to the substrate site; that span reads VVSGG. A Fe cation-binding site is contributed by Asp-305.

It belongs to the KAE1 / TsaD family. Fe(2+) is required as a cofactor.

The protein localises to the cytoplasm. The enzyme catalyses L-threonylcarbamoyladenylate + adenosine(37) in tRNA = N(6)-L-threonylcarbamoyladenosine(37) in tRNA + AMP + H(+). In terms of biological role, required for the formation of a threonylcarbamoyl group on adenosine at position 37 (t(6)A37) in tRNAs that read codons beginning with adenine. Is involved in the transfer of the threonylcarbamoyl moiety of threonylcarbamoyl-AMP (TC-AMP) to the N6 group of A37, together with TsaE and TsaB. TsaD likely plays a direct catalytic role in this reaction. The chain is tRNA N6-adenosine threonylcarbamoyltransferase from Clostridium beijerinckii (strain ATCC 51743 / NCIMB 8052) (Clostridium acetobutylicum).